The sequence spans 509 residues: Surface lipoprotein assembly modifier (509 aa).

A signal peptide spans 1-32; it reads MNLMINLKPLTFLPFFGRLVFLSGVIYNTAWA. An N-terminal domain region spans residues 33 to 204; it reads NTVIPVDNSR…SYIDTINQRD (172 aa). Residues 43–72 are disordered; sequence PDETFSQTSPKQHLFSQKPKPTEPTSSASS. Positions 46-57 are enriched in polar residues; sequence TFSQTSPKQHLF. Residues 120 to 153 form a TPR repeat; the sequence is FLLKWAQAVVARKQGKLNESVRLYRQIIAEKPNL. Residues 205 to 509 are C-terminal probable beta barrel; it reads SWNVYGGVNY…RIYLTFSKTF (305 aa). 14 beta stranded membrane passes run 206–216, 245–256, 261–270, 284–294, 298–308, 331–341, 345–355, 371–381, 386–395, 408–417, 423–432, 461–470, 476–485, and 499–509; these read WNVYGGVNYLH, LSYFINLSKNWS, FFTEFSADIN, STRLNLGGGYR, TEVKLMPFVEQ, SGINLDVDYWL, WKISTVLEYTE, YSISNTLIYMP, FWFVGLDYYQ, QGIRLGWGQE, STRLQTSYAT, GVNFTIWHRS, ITPKITWAYQ, and NRIYLTFSKTF.

It belongs to the Slam family.

The protein localises to the cell outer membrane. Required for correct export to the cell surface of some cell outer membrane lipoproteins (tested with PM1514) upon heterologous expression in E.coli and probably also in Pasteurella. This Pasteurella multocida (strain Pm70) protein is Surface lipoprotein assembly modifier.